We begin with the raw amino-acid sequence, 503 residues long: UDP-N-acetylmuramate--L-alanine ligase (503 aa).

120–126 (GTHGKTS) lines the ATP pocket.

The protein belongs to the MurCDEF family.

The protein resides in the cytoplasm. The enzyme catalyses UDP-N-acetyl-alpha-D-muramate + L-alanine + ATP = UDP-N-acetyl-alpha-D-muramoyl-L-alanine + ADP + phosphate + H(+). It participates in cell wall biogenesis; peptidoglycan biosynthesis. Cell wall formation. This Rhodococcus jostii (strain RHA1) protein is UDP-N-acetylmuramate--L-alanine ligase.